The sequence spans 545 residues: CTP synthase (545 aa).

The segment at 1-266 (MTTNYIFVTG…DDYICKRFGL (266 aa)) is amidoligase domain. Serine 14 provides a ligand contact to CTP. UTP is bound at residue serine 14. ATP-binding positions include 15-20 (SLGKGI) and aspartate 72. Residues aspartate 72 and glutamate 140 each coordinate Mg(2+). Residues 147–149 (DIE), 187–192 (KTKPTQ), and lysine 223 each bind CTP. UTP contacts are provided by residues 187–192 (KTKPTQ) and lysine 223. 239–241 (KDV) is an ATP binding site. The 252-residue stretch at 291-542 (TIGMVGKYIA…VKAAGEYQKR (252 aa)) folds into the Glutamine amidotransferase type-1 domain. Glycine 352 contributes to the L-glutamine binding site. Cysteine 379 functions as the Nucleophile; for glutamine hydrolysis in the catalytic mechanism. Residues 380-383 (LGMQ), glutamate 403, and arginine 470 each bind L-glutamine. Residues histidine 515 and glutamate 517 contribute to the active site.

It belongs to the CTP synthase family. In terms of assembly, homotetramer.

It carries out the reaction UTP + L-glutamine + ATP + H2O = CTP + L-glutamate + ADP + phosphate + 2 H(+). The catalysed reaction is L-glutamine + H2O = L-glutamate + NH4(+). The enzyme catalyses UTP + NH4(+) + ATP = CTP + ADP + phosphate + 2 H(+). It participates in pyrimidine metabolism; CTP biosynthesis via de novo pathway; CTP from UDP: step 2/2. With respect to regulation, allosterically activated by GTP, when glutamine is the substrate; GTP has no effect on the reaction when ammonia is the substrate. The allosteric effector GTP functions by stabilizing the protein conformation that binds the tetrahedral intermediate(s) formed during glutamine hydrolysis. Inhibited by the product CTP, via allosteric rather than competitive inhibition. Catalyzes the ATP-dependent amination of UTP to CTP with either L-glutamine or ammonia as the source of nitrogen. Regulates intracellular CTP levels through interactions with the four ribonucleotide triphosphates. The chain is CTP synthase from Sodalis glossinidius (strain morsitans).